The following is a 189-amino-acid chain: Protein Rex (189 aa).

Residues 1–16 (MPKTRRRPRRSQRKRP) are compositionally biased toward basic residues. Residues 1–28 (MPKTRRRPRRSQRKRPPTPWPTSQGLDR) form a disordered region. Positions 2 to 18 (PKTRRRPRRSQRKRPPT) match the Nuclear localization signal, and RNA-binding (RxRE) motif. The segment at 56 to 70 (RPVYIVTPYWPPVQS) is homomultimerization. Serine 70 is modified (phosphoserine; by host). Positions 82 to 93 (LSAQLYSSLSLD) match the Nuclear export signal motif. Low complexity predominate over residues 84-94 (AQLYSSLSLDS). The disordered stretch occupies residues 84–189 (AQLYSSLSLD…PPSPGPSCPT (106 aa)). Pro residues predominate over residues 111–125 (RRPPIQPPTFHPPSS). The homomultimerization stretch occupies residues 123-131 (PSSRPCANT). The span at 127–164 (PCANTPPSETDTWNPPLGSTSQPCLFQTPASGPKTCTP) shows a compositional bias: polar residues. Threonine 174 carries the post-translational modification Phosphothreonine; by host. Position 177 is a phosphoserine; by host (serine 177). A compositionally biased stretch (pro residues) spans 178–189 (FPPPSPGPSCPT).

The protein belongs to the deltaretrovirus Rex protein family. Homomultimer. Multimeric assembly is essential for activity and involves XPO1. Binds to human XPO1 and KPNB1. Interacts (via N-terminal nuclear localization signal) with human NPM1. In terms of processing, phosphorylated.

Its subcellular location is the host nucleus. It localises to the host nucleolus. It is found in the host cytoplasm. Its function is as follows. Rex escorts unspliced gag-pro-pol and singly spliced env mRNAs out of the nucleus of infected cells. These mRNAs carry a recognition sequence called Rex responsive element (RxRE or XRE) located at the 3' region of the long terminal repeat (LTR). This function is essential since most HTLV proteins are translated from unspliced or partially spliced pre-mRNAs that cannot exit the nucleus by the pathway used by fully processed cellular mRNAs. Rex itself is translated from a fully spliced mRNA that probably readily exits the nucleus. Rex's nuclear localization signal (NLS) binds directly to KPNB1/importin beta-1 without previous binding to KPNA1/importin alpha-1. KPNB1 binds to the GDP bound form of RAN (Ran-GDP) and targets Rex to the nucleus. In the nucleus, the conversion from Ran-GDP to Ran-GTP dissociates Rex from KPNB1 and allows Rex's binding to the RRE in viral pre-mRNAs. Rex multimerizes on the RRE via cooperative assembly. This multimerization is critical for its full biological activity, since it may shield the viral RNA from being spliced or down-regulated, and probably exposes Rex's nuclear export signal (NES) to the surface. Rex can then form a complex with XPO1/CRM1, RANBP3 and Ran-GTP, leading to nuclear export of the complex. Conversion from Ran-GTP to Ran-GDP mediates dissociation of the Rex/RRE/XPO1/RANBP3/RAN complex, so that Rex can return to the nucleus for a subsequent round of export. This Homo sapiens (Human) protein is Protein Rex.